A 151-amino-acid chain; its full sequence is MTALEMQLTELLEASVNASGYELVGLEFIRAGEHSTLRVFVDHENGINVEDCAEASRQISAVMDVEDPITVAYHLEVSSPGLERPLFKAAHYQQFVGHEVNLVLKMAMNNRRKWKGDIVAVEGELITLKVDGNDETFALSNISKANLIPKF.

Belongs to the RimP family.

It localises to the cytoplasm. Functionally, required for maturation of 30S ribosomal subunits. The polypeptide is Ribosome maturation factor RimP (Photobacterium profundum (strain SS9)).